The primary structure comprises 175 residues: uncharacterized protein (175 aa).

This sequence belongs to the asfivirus B175L family.

This is an uncharacterized protein from Ornithodoros (relapsing fever ticks).